Here is a 248-residue protein sequence, read N- to C-terminus: tRNA (guanine-N(1)-)-methyltransferase (248 aa).

Residues glycine 113 and 133 to 138 contribute to the S-adenosyl-L-methionine site; that span reads VGDYVL.

This sequence belongs to the RNA methyltransferase TrmD family. Homodimer.

It localises to the cytoplasm. The catalysed reaction is guanosine(37) in tRNA + S-adenosyl-L-methionine = N(1)-methylguanosine(37) in tRNA + S-adenosyl-L-homocysteine + H(+). Its function is as follows. Specifically methylates guanosine-37 in various tRNAs. The chain is tRNA (guanine-N(1)-)-methyltransferase from Shewanella sp. (strain W3-18-1).